A 176-amino-acid polypeptide reads, in one-letter code: Transmembrane protein 238 (176 aa).

The tract at residues 1–22 (MAAAPAVCASQGSPPGAPSAPA) is disordered. The Cytoplasmic portion of the chain corresponds to 1–36 (MAAAPAVCASQGSPPGAPSAPAAAPAPAAGLGRCRM). Positions 9–22 (ASQGSPPGAPSAPA) are enriched in low complexity. The chain crosses the membrane as a helical span at residues 37–57 (ALLLAVALDVAGMAALLTGVF). The Extracellular segment spans residues 58–69 (AQLQVRGRDFGD). The helical transmembrane segment at 70-90 (LLIYSGALLVFLSLLGWILWY) threads the bilayer. Topologically, residues 91–176 (TGNIEISRQE…GPGAAGAGSE (86 aa)) are cytoplasmic. Positions 124–137 (SAPAAAGQRPAPGS) are enriched in low complexity. Residues 124 to 157 (SAPAAAGQRPAPGSRRARRAARAPPPPAAGSRRV) are disordered. A Phosphoserine modification is found at serine 175.

The protein localises to the membrane. The polypeptide is Transmembrane protein 238 (TMEM238) (Homo sapiens (Human)).